We begin with the raw amino-acid sequence, 317 residues long: MARGLDLAPLLLLLLAMVAGFCTAQINCTCPTNKMTICNSNGPGGVCQCRAIGSQVLVDCSTLTSKCLLLKARMSARKSSRRLVNPSEHAILDNDGLYDPECDDKGRFKARQCNQTSVCWCVNSVGVRRTDKGDQSLRCDEVVRTHHILIELRHRPTDRAFNHSDLDSELRRLFKERYKLHPSFLAAVHYEEPTIQIELQQNASQKGLRDVDIADAAYYFERDIKGESLFVGRRGLDVQVRGEPLHVERTLIYYLDEKPPQFSMKRLTTGLIAVIAVVAVALVAGVVVLVVTNRRKSGKYKKVELKELGEMRSEPSL.

The first 24 residues, 1-24 (MARGLDLAPLLLLLLAMVAGFCTA), serve as a signal peptide directing secretion. Residues 25 to 270 (QINCTCPTNK…QFSMKRLTTG (246 aa)) lie on the Extracellular side of the membrane. The N-linked (GlcNAc...) asparagine glycan is linked to asparagine 27. A Thyroglobulin type-1 domain is found at 64-139 (TSKCLLLKAR…TDKGDQSLRC (76 aa)). Intrachain disulfides connect cysteine 67–cysteine 102, cysteine 113–cysteine 119, and cysteine 121–cysteine 139. The N-linked (GlcNAc...) asparagine glycan is linked to asparagine 114. 2 N-linked (GlcNAc...) asparagine glycosylation sites follow: asparagine 162 and asparagine 202. Residues 271 to 291 (LIAVIAVVAVALVAGVVVLVV) form a helical membrane-spanning segment. Residues 292–317 (TNRRKSGKYKKVELKELGEMRSEPSL) lie on the Cytoplasmic side of the membrane.

Belongs to the EPCAM family.

It is found in the membrane. Its function is as follows. May function as a growth factor receptor. The chain is Tumor-associated calcium signal transducer 2 (Tacstd2) from Rattus norvegicus (Rat).